A 317-amino-acid chain; its full sequence is Apolipoprotein E (317 aa).

An N-terminal signal peptide occupies residues 1-18 (MKVLWAALLVTFLAGCQA). A run of 8 repeats spans residues 80 to 101 (TLMDETMKELKAYKSELEEQLS), 102 to 123 (PVAEETRARLSKELQAAQARLG), 124 to 145 (ADMEDVRSRLVQYRSELQAMLG), 146 to 167 (QSTEELRARLASHLRKLRKRLL), 168 to 189 (RDADDLQKRLAVYQAGAREGAE), 190 to 211 (RGVSAIRERLGPLVEQGRVRAA), 212 to 233 (TVGSLASQPLQERAQALGERLR), and 234 to 255 (ARMEEMGSRTRDRLDEVKEQVA). Positions 80 to 255 (TLMDETMKEL…RLDEVKEQVA (176 aa)) are 8 X 22 AA approximate tandem repeats. Met-143 bears the Methionine sulfoxide mark. Ser-147 carries the phosphoserine modification. Residues 158-168 (HLRKLRKRLLR) form an LDL and other lipoprotein receptors binding region. 162 to 165 (LRKR) provides a ligand contact to heparin. The tract at residues 210-290 (AATVGSLASQ…SWFEPLVEDM (81 aa)) is lipid-binding and lipoprotein association. 229–236 (GERLRARM) serves as a coordination point for heparin. Residues 266 to 317 (QQISLQAEAFQARLKSWFEPLVEDMQRQWAGLVEKVQAAVGASTAPVPSDNH) are homooligomerization. Residues 278-290 (RLKSWFEPLVEDM) form a specificity for association with VLDL region.

It belongs to the apolipoprotein A1/A4/E family. In terms of assembly, homotetramer. May interact with ABCA1; functionally associated with ABCA1 in the biogenesis of HDLs. May interact with APP/A4 amyloid-beta peptide; the interaction is extremely stable in vitro but its physiological significance is unclear. May interact with MAPT. May interact with MAP2. In the cerebrospinal fluid, interacts with secreted SORL1. Interacts with PMEL; this allows the loading of PMEL luminal fragment on ILVs to induce fibril nucleation. Post-translationally, APOE exists as multiple glycosylated and sialylated glycoforms within cells and in plasma. The extent of glycosylation and sialylation are tissue and context specific. In terms of processing, glycated in plasma VLDL. Phosphorylated by FAM20C in the extracellular medium.

The protein resides in the secreted. It localises to the extracellular space. It is found in the extracellular matrix. The protein localises to the extracellular vesicle. Its subcellular location is the endosome. The protein resides in the multivesicular body. Its function is as follows. APOE is an apolipoprotein, a protein associating with lipid particles, that mainly functions in lipoprotein-mediated lipid transport between organs via the plasma and interstitial fluids. APOE is a core component of plasma lipoproteins and is involved in their production, conversion and clearance. Apolipoproteins are amphipathic molecules that interact both with lipids of the lipoprotein particle core and the aqueous environment of the plasma. As such, APOE associates with chylomicrons, chylomicron remnants, very low density lipoproteins (VLDL) and intermediate density lipoproteins (IDL) but shows a preferential binding to high-density lipoproteins (HDL). It also binds a wide range of cellular receptors including the LDL receptor/LDLR, the LDL receptor-related proteins LRP1, LRP2 and LRP8 and the very low-density lipoprotein receptor/VLDLR that mediate the cellular uptake of the APOE-containing lipoprotein particles. Finally, APOE also has a heparin-binding activity and binds heparan-sulfate proteoglycans on the surface of cells, a property that supports the capture and the receptor-mediated uptake of APOE-containing lipoproteins by cells. A main function of APOE is to mediate lipoprotein clearance through the uptake of chylomicrons, VLDLs, and HDLs by hepatocytes. APOE is also involved in the biosynthesis by the liver of VLDLs as well as their uptake by peripheral tissues ensuring the delivery of triglycerides and energy storage in muscle, heart and adipose tissues. By participating in the lipoprotein-mediated distribution of lipids among tissues, APOE plays a critical role in plasma and tissues lipid homeostasis. APOE is also involved in two steps of reverse cholesterol transport, the HDLs-mediated transport of cholesterol from peripheral tissues to the liver, and thereby plays an important role in cholesterol homeostasis. First, it is functionally associated with ABCA1 in the biogenesis of HDLs in tissues. Second, it is enriched in circulating HDLs and mediates their uptake by hepatocytes. APOE also plays an important role in lipid transport in the central nervous system, regulating neuron survival and sprouting. This Theropithecus gelada (Gelada baboon) protein is Apolipoprotein E (APOE).